Consider the following 270-residue polypeptide: Phosphatidylglycerol--prolipoprotein diacylglyceryl transferase (270 aa).

The next 7 helical transmembrane spans lie at 17-37, 59-79, 95-115, 129-149, 175-195, 202-222, and 237-257; these read LAIRWYGLMYLAGFIMFLWFG, MLFYGVLGVILGGRLGYVLFY, WEGGMAFHGGFLGVLIAMWVF, FIAPMIPCGLAAGRIGNFING, PSQLYQFAGEGVALFIILWLF, MGAVSGVFLIGYGAFRFLAEF, and LSMGQWLSLPMIVIGAVMVVW. A 1,2-diacyl-sn-glycero-3-phospho-(1'-sn-glycerol) is bound at residue R142.

The protein belongs to the Lgt family.

The protein resides in the cell inner membrane. The enzyme catalyses L-cysteinyl-[prolipoprotein] + a 1,2-diacyl-sn-glycero-3-phospho-(1'-sn-glycerol) = an S-1,2-diacyl-sn-glyceryl-L-cysteinyl-[prolipoprotein] + sn-glycerol 1-phosphate + H(+). It functions in the pathway protein modification; lipoprotein biosynthesis (diacylglyceryl transfer). In terms of biological role, catalyzes the transfer of the diacylglyceryl group from phosphatidylglycerol to the sulfhydryl group of the N-terminal cysteine of a prolipoprotein, the first step in the formation of mature lipoproteins. The sequence is that of Phosphatidylglycerol--prolipoprotein diacylglyceryl transferase from Cupriavidus metallidurans (strain ATCC 43123 / DSM 2839 / NBRC 102507 / CH34) (Ralstonia metallidurans).